The chain runs to 1305 residues: MDSVPRLNSVFTLVLSGLWHFGLTATNYNCDDPLTSFLSLRAFSSSSDLTGRSSPAQLNWRMGTGGWSPADSNAQQWLQMDLGNRVEITAVATQGRYGSSDWVTSYRLMFSDTGHNWQQYTQEGSIWRFVGNMNANSVVHHKLLNSVRARFVRFVPLEWNPNGKIGMRVEVYGCSYRSDVADFDGWSSLLYRFNQKTMSTLKDVISLKFKSIQRDGVLFHGEGQRGDHITLELQNGRLALYLNLDDSKAQVSSTAPLATLGSLLDDQHWHSVLLERVGKQANFTVDKNTQHFQTKGETDALDIDYELSFGGIPVPSKPGTFLKKNFHGCIENLYYNGVNIIDLAKRRKHQIYSGNVTFSCSEPQTVPITFVNSRSSYLLLTGTPQIDGLSVSFQFRTWNEDGLLLSTELSEGSGTLLLILEGGTLRLLIKKLARHGTEIFTGSGLNDGMWHSVSISARRNRVTLTLDNDAASLPPDTSWLQIYSGNSYYFGGCPDNLTDSQCLNPIKAFQGCMRLIFIDNQPKDLISVQQGSLGSFSDLHIDLCSIKDRCLPNYCEHGGQCAQTWTNFYCNCSDTGYTGATCHDSIYEQSCEVYRHRGKTAEFFYVDSDGSGPLGPLQVFCNITEDKIWMTVQHNNTGLTWVQGSNPEKPYAMTLNYGGSLEQLEALIDGSEHCEQEVTYYCKRSRLLNTPDGVPFTWWIGRSNEKHPYWGGSLPGVQQCGCGLEESCLDIRHFCNCDADTDEWTNDTGYLSFKDHLPVTQIIITDTNRSKSEAAWRIGPLRCYGDRHFWNAVSFSTEASFLHFPTFRVEFSADIFFFFKTTALSGVFLEILGIKDFLRLEMSSPSEVIFAIDVGNGPIDLLVQSPYPLNDNQWHYIRAERNLKETSLQVDNLPQSMREASEEGHFQFQLNSQLFVGGKSSRQKGFFGCIRSLHLNGQNIDLEERAKVTSGVRPGCPGHCSSYGRNCQNGGKCVEKHIGYSCDCTNSPYEGPFCQKEISALFDSDTSVTYMFQEPYSVTKNTNLSSSAIYTDTAPSKEIIMLSFMTAQAPTLLLYLNFSSQNFLAILLSWNGSLQIHYQLSKEESHVFTINTENLANRRVHQVKMSRDGPELSIQMDQQLFSYTFSLESEFQRARSLVLGKVTETLGLDPEVARANTLGFVGCLSSVQYNHITPLKAALRHASISPVTVQRTLTESSCVSMVDSDANAVTTVYSSTDPFGERDEREPLTNAVPSDLAVIGGIIAVVTFISFSVIGIMTHFFYQHKRSHYASQMKEKEYPENVDSSSRNDIDLQNTTRECKQEDFI.

The signal sequence occupies residues 1–24 (MDSVPRLNSVFTLVLSGLWHFGLT). Residues 25 to 174 (ATNYNCDDPL…IGMRVEVYGC (150 aa)) enclose the F5/8 type C domain. Residues 25-1235 (ATNYNCDDPL…EPLTNAVPSD (1211 aa)) lie on the Extracellular side of the membrane. Laminin G-like domains are found at residues 180-360 (VADF…TFSC) and 367-544 (PITF…IDLC). An N-linked (GlcNAc...) asparagine glycan is attached at Asn-282. A disulfide bond links Cys-329 and Cys-360. A glycan (N-linked (GlcNAc...) asparagine) is linked at Asn-496. Disulfide bonds link Cys-512–Cys-544, Cys-550–Cys-561, and Cys-555–Cys-570. The EGF-like 1 domain occupies 546–583 (IKDRCLPNYCEHGGQCAQTWTNFYCNCSDTGYTGATCH). Asn-571 carries N-linked (GlcNAc...) asparagine glycosylation. Cys-572 and Cys-582 form a disulfide bridge. Residues 584–790 (DSIYEQSCEV…LRCYGDRHFW (207 aa)) enclose the Fibrinogen C-terminal domain. The region spanning 791–956 (NAVSFSTEAS…KVTSGVRPGC (166 aa)) is the Laminin G-like 3 domain. Intrachain disulfides connect Cys-929/Cys-956, Cys-960/Cys-973, Cys-967/Cys-982, and Cys-984/Cys-994. Residues 957 to 995 (PGHCSSYGRNCQNGGKCVEKHIGYSCDCTNSPYEGPFCQ) form the EGF-like 2 domain. In terms of domain architecture, Laminin G-like 4 spans 1013 to 1198 (QEPYSVTKNT…VQRTLTESSC (186 aa)). N-linked (GlcNAc...) asparagine glycosylation is found at Asn-1023 and Asn-1057. Cys-1163 and Cys-1198 form a disulfide bridge. Residues 1236 to 1256 (LAVIGGIIAVVTFISFSVIGI) form a helical membrane-spanning segment. Over 1257–1305 (MTHFFYQHKRSHYASQMKEKEYPENVDSSSRNDIDLQNTTRECKQEDFI) the chain is Cytoplasmic.

The protein belongs to the neurexin family. As to expression, expressed in brain.

The protein resides in the membrane. May play a role in the correct development and proper functioning of the peripheral and central nervous system and be involved in cell adhesion and intercellular communication. This is Contactin-associated protein like 5-3 (Cntnap5c) from Mus musculus (Mouse).